A 65-amino-acid chain; its full sequence is Large ribosomal subunit protein bL35 (65 aa).

Residues 1–16 (MVPKQKTHSGAKKRFK) are compositionally biased toward basic residues. Residues 1–39 (MVPKQKTHSGAKKRFKLTGSGSVSRARAGMRHNFEHRSS) are disordered.

The protein belongs to the bacterial ribosomal protein bL35 family.

The polypeptide is Large ribosomal subunit protein bL35 (Tropheryma whipplei (strain TW08/27) (Whipple's bacillus)).